The primary structure comprises 554 residues: Dihydroxy-acid dehydratase (554 aa).

Cys-51 contributes to the [2Fe-2S] cluster binding site. Asp-83 is a binding site for Mg(2+). Cys-124 provides a ligand contact to [2Fe-2S] cluster. Mg(2+)-binding residues include Asp-125 and Lys-126. Lys-126 carries the N6-carboxylysine modification. Residue Cys-193 participates in [2Fe-2S] cluster binding. Position 444 (Glu-444) interacts with Mg(2+). Catalysis depends on Ser-470, which acts as the Proton acceptor.

The protein belongs to the IlvD/Edd family. Homodimer. It depends on [2Fe-2S] cluster as a cofactor. Mg(2+) is required as a cofactor.

It carries out the reaction (2R)-2,3-dihydroxy-3-methylbutanoate = 3-methyl-2-oxobutanoate + H2O. The catalysed reaction is (2R,3R)-2,3-dihydroxy-3-methylpentanoate = (S)-3-methyl-2-oxopentanoate + H2O. It functions in the pathway amino-acid biosynthesis; L-isoleucine biosynthesis; L-isoleucine from 2-oxobutanoate: step 3/4. It participates in amino-acid biosynthesis; L-valine biosynthesis; L-valine from pyruvate: step 3/4. Functions in the biosynthesis of branched-chain amino acids. Catalyzes the dehydration of (2R,3R)-2,3-dihydroxy-3-methylpentanoate (2,3-dihydroxy-3-methylvalerate) into 2-oxo-3-methylpentanoate (2-oxo-3-methylvalerate) and of (2R)-2,3-dihydroxy-3-methylbutanoate (2,3-dihydroxyisovalerate) into 2-oxo-3-methylbutanoate (2-oxoisovalerate), the penultimate precursor to L-isoleucine and L-valine, respectively. This chain is Dihydroxy-acid dehydratase, found in Vesicomyosocius okutanii subsp. Calyptogena okutanii (strain HA).